Consider the following 156-residue polypeptide: MSQQGISLDLDLQIAVDNPRLPTQAEFETWVRAAIGQTKPVVELTIRIVDIAESQQLNSTYRGKDKPTNVLSFPFEAPPEVELPLLGDLVICAPVVEQEAIEQNKPLIAHWAHMVIHGSLHLLGYDHIIDEEADEMESLETQLVEGLGFDNPYKEA.

Zn(2+) contacts are provided by histidine 117, histidine 121, and histidine 127.

The protein belongs to the endoribonuclease YbeY family. Zn(2+) serves as cofactor.

The protein resides in the cytoplasm. Its function is as follows. Single strand-specific metallo-endoribonuclease involved in late-stage 70S ribosome quality control and in maturation of the 3' terminus of the 16S rRNA. The chain is Endoribonuclease YbeY from Shewanella frigidimarina (strain NCIMB 400).